Consider the following 502-residue polypeptide: Probable cytosol aminopeptidase (502 aa).

Positions 269 and 274 each coordinate Mn(2+). The active site involves Lys281. The Mn(2+) site is built by Asp292, Asp351, and Glu353. The active site involves Arg355.

This sequence belongs to the peptidase M17 family. Mn(2+) is required as a cofactor.

It localises to the cytoplasm. The enzyme catalyses Release of an N-terminal amino acid, Xaa-|-Yaa-, in which Xaa is preferably Leu, but may be other amino acids including Pro although not Arg or Lys, and Yaa may be Pro. Amino acid amides and methyl esters are also readily hydrolyzed, but rates on arylamides are exceedingly low.. It carries out the reaction Release of an N-terminal amino acid, preferentially leucine, but not glutamic or aspartic acids.. In terms of biological role, presumably involved in the processing and regular turnover of intracellular proteins. Catalyzes the removal of unsubstituted N-terminal amino acids from various peptides. The polypeptide is Probable cytosol aminopeptidase (Photobacterium profundum (strain SS9)).